The following is a 276-amino-acid chain: Large ribosomal subunit protein uL2 (276 aa).

Basic and acidic residues predominate over residues 28 to 38; the sequence is RPEKSLTEKLS. 2 disordered regions span residues 28–57 and 219–276; these read RPEK…QGGG and TVRG…RRKK.

The protein belongs to the universal ribosomal protein uL2 family. In terms of assembly, part of the 50S ribosomal subunit. Forms a bridge to the 30S subunit in the 70S ribosome.

Functionally, one of the primary rRNA binding proteins. Required for association of the 30S and 50S subunits to form the 70S ribosome, for tRNA binding and peptide bond formation. It has been suggested to have peptidyltransferase activity; this is somewhat controversial. Makes several contacts with the 16S rRNA in the 70S ribosome. The protein is Large ribosomal subunit protein uL2 of Exiguobacterium sp. (strain ATCC BAA-1283 / AT1b).